We begin with the raw amino-acid sequence, 265 residues long: Undecaprenyl-diphosphatase (265 aa).

The next 8 membrane-spanning stretches (helical) occupy residues 1–21, 39–59, 83–103, 114–134, 144–164, 188–208, 218–238, and 244–264; these read MDWF…FLPI, QGLA…MMYY, LKLG…GFLG, ALVI…SDAF, LGVA…IPGT, SFLL…KDLI, MMAL…VFFI, and VGML…LFWL.

This sequence belongs to the UppP family.

It localises to the cell inner membrane. It carries out the reaction di-trans,octa-cis-undecaprenyl diphosphate + H2O = di-trans,octa-cis-undecaprenyl phosphate + phosphate + H(+). Catalyzes the dephosphorylation of undecaprenyl diphosphate (UPP). Confers resistance to bacitracin. This Alcanivorax borkumensis (strain ATCC 700651 / DSM 11573 / NCIMB 13689 / SK2) protein is Undecaprenyl-diphosphatase.